Here is a 470-residue protein sequence, read N- to C-terminus: Sulfate adenylyltransferase subunit 1 (470 aa).

The tr-type G domain maps to 22–238 (KELLRFITCG…ETIKIDYAYT (217 aa)). The interval 31–38 (GSVDDGKS) is G1. 31–38 (GSVDDGKS) is a GTP binding site. The interval 89 to 93 (GITID) is G2. The G3 stretch occupies residues 110–113 (DTPG). Residues 110–114 (DTPGH) and 165–168 (NKMD) contribute to the GTP site. A G4 region spans residues 165-168 (NKMD). The interval 202–204 (SAL) is G5.

The protein belongs to the TRAFAC class translation factor GTPase superfamily. Classic translation factor GTPase family. CysN/NodQ subfamily. Heterodimer composed of CysD, the smaller subunit, and CysN.

It catalyses the reaction sulfate + ATP + H(+) = adenosine 5'-phosphosulfate + diphosphate. The protein operates within sulfur metabolism; hydrogen sulfide biosynthesis; sulfite from sulfate: step 1/3. With CysD forms the ATP sulfurylase (ATPS) that catalyzes the adenylation of sulfate producing adenosine 5'-phosphosulfate (APS) and diphosphate, the first enzymatic step in sulfur assimilation pathway. APS synthesis involves the formation of a high-energy phosphoric-sulfuric acid anhydride bond driven by GTP hydrolysis by CysN coupled to ATP hydrolysis by CysD. The polypeptide is Sulfate adenylyltransferase subunit 1 (Francisella tularensis subsp. tularensis (strain SCHU S4 / Schu 4)).